The primary structure comprises 526 residues: Triacylglycerol lipase OBL1 (526 aa).

Residues glycine 79 to leucine 99 form a helical membrane-spanning segment. Positions glycine 338–glycine 342 match the GXSXG motif. Serine 340 functions as the Nucleophile in the catalytic mechanism. Active-site charge relay system residues include aspartate 404 and histidine 497.

This sequence belongs to the AB hydrolase superfamily. Lipase family.

It is found in the membrane. The enzyme catalyses a triacylglycerol + H2O = a diacylglycerol + a fatty acid + H(+). Functionally, acid lipase that can hydrolyze a range of triacylglycerols but is not active on phospholipids. In vitro, hydrolyzes triolein, trilinolein, triricinolein, tripalmitin, trilaurin and tricaprin. May play a role in the regulation of lipolysis in germinating seeds. In Ricinus communis (Castor bean), this protein is Triacylglycerol lipase OBL1.